Here is a 640-residue protein sequence, read N- to C-terminus: Protein SPT10 (640 aa).

Positions 1–30 (MLNQHTSSVPDDEHLQMAHQNSSSEVRNEA) are disordered. One can recognise an N-acetyltransferase domain in the interval 121–259 (LDYSMDTEAD…AGILKGFDVP (139 aa)). The disordered stretch occupies residues 534–565 (PHLTNNESQDHANPVNRDERDMNHSVPDLDRN). Basic and acidic residues predominate over residues 549 to 565 (NRDERDMNHSVPDLDRN).

Required for normal transcription at a number of loci in yeast. Affects transcription at Ty1 elements, at PHO5, STE6 and ADH2. This chain is Protein SPT10 (SPT10), found in Saccharomyces cerevisiae (strain ATCC 204508 / S288c) (Baker's yeast).